The primary structure comprises 112 residues: T cell receptor alpha variable 17 (112 aa).

An N-terminal signal peptide occupies residues 1 to 21 (METLLGVSLVILWLQLARVNS). The region spanning 22 to 112 (QQGEEDPQAL…DTASYFCATD (91 aa)) is the Ig-like domain. N-linked (GlcNAc...) asparagine glycans are attached at residues Asn-38 and Asn-42. A disulfide bridge links Cys-43 with Cys-109.

Alpha-beta TR is a heterodimer composed of an alpha and beta chain; disulfide-linked. The alpha-beta TR is associated with the transmembrane signaling CD3 coreceptor proteins to form the TR-CD3 (TcR or TCR). The assembly of alpha-beta TR heterodimers with CD3 occurs in the endoplasmic reticulum where a single alpha-beta TR heterodimer associates with one CD3D-CD3E heterodimer, one CD3G-CD3E heterodimer and one CD247 homodimer forming a stable octameric structure. CD3D-CD3E and CD3G-CD3E heterodimers preferentially associate with TR alpha and TR beta chains, respectively. The association of the CD247 homodimer is the last step of TcR assembly in the endoplasmic reticulum and is required for transport to the cell surface.

It is found in the cell membrane. In terms of biological role, v region of the variable domain of T cell receptor (TR) alpha chain that participates in the antigen recognition. Alpha-beta T cell receptors are antigen specific receptors which are essential to the immune response and are present on the cell surface of T lymphocytes. Recognize peptide-major histocompatibility (MH) (pMH) complexes that are displayed by antigen presenting cells (APC), a prerequisite for efficient T cell adaptive immunity against pathogens. Binding of alpha-beta TR to pMH complex initiates TR-CD3 clustering on the cell surface and intracellular activation of LCK that phosphorylates the ITAM motifs of CD3G, CD3D, CD3E and CD247 enabling the recruitment of ZAP70. In turn ZAP70 phosphorylates LAT, which recruits numerous signaling molecules to form the LAT signalosome. The LAT signalosome propagates signal branching to three major signaling pathways, the calcium, the mitogen-activated protein kinase (MAPK) kinase and the nuclear factor NF-kappa-B (NF-kB) pathways, leading to the mobilization of transcription factors that are critical for gene expression and essential for T cell growth and differentiation. The T cell repertoire is generated in the thymus, by V-(D)-J rearrangement. This repertoire is then shaped by intrathymic selection events to generate a peripheral T cell pool of self-MH restricted, non-autoaggressive T cells. Post-thymic interaction of alpha-beta TR with the pMH complexes shapes TR structural and functional avidity. This chain is T cell receptor alpha variable 17, found in Homo sapiens (Human).